Here is a 234-residue protein sequence, read N- to C-terminus: Inner membrane protein YbhL (234 aa).

Over 1–23 (MDRFPRSDSIVQPRAGLQTYMAQ) the chain is Periplasmic. Residues 24 to 44 (VYGWMTVGLLLTAFVAWYAAN) traverse the membrane as a helical segment. At 45–56 (SAAVMELLFTNR) the chain is on the cytoplasmic side. The helical transmembrane segment at 57–77 (VFLIGLIIAQLALVIVLSAMI) threads the bilayer. The Periplasmic segment spans residues 78-79 (QK). The helical transmembrane segment at 80 to 100 (LSAGVTTMLFMLYSALTGLTL) threads the bilayer. Over 101-102 (SS) the chain is Cytoplasmic. A helical membrane pass occupies residues 103 to 123 (IFIVYTAASIASTFVVTAGMF). Over 124–136 (GAMSLYGYTTKRD) the chain is Periplasmic. A helical membrane pass occupies residues 137–157 (LSGFGNMLFMALIGIVLASLV). At 158-163 (NFWLKS) the chain is on the cytoplasmic side. A helical transmembrane segment spans residues 164-184 (EALMWAVTYIGVIVFVGLTAY). Over 185–206 (DTQKLKNMGEQIDTRDTSNLRK) the chain is Periplasmic. Residues 207 to 227 (YSILGALTLYLDFINLFLMLL) form a helical membrane-spanning segment. Over 228–234 (RIFGNRR) the chain is Cytoplasmic.

This sequence belongs to the BI1 family.

Its subcellular location is the cell inner membrane. The sequence is that of Inner membrane protein YbhL (ybhL) from Escherichia coli (strain K12).